Consider the following 350-residue polypeptide: Probable nicotinate-nucleotide adenylyltransferase/Ap4A hydrolase (350 aa).

The tract at residues 1–187 is naMN adenylyltransferase; the sequence is MKQKIIIFGG…YINTNHLYLI (187 aa). The ap4A hydrolase stretch occupies residues 196–350; the sequence is DKRFQHCLRV…LKYVQNLVKD (155 aa). Residues 198–310 enclose the HD domain; sequence RFQHCLRVGK…VYLADKLEPN (113 aa). Residue His201 coordinates ADP. 3 residues coordinate Fe cation: His201, His230, and Asp231. ADP contacts are provided by residues 231-234, His261, 287-288, Asp305, and Arg311; these read DLAK and HT. A Fe cation-binding site is contributed by Asp305.

The protein in the N-terminal section; belongs to the NadD family. In the C-terminal section; belongs to the Ap4A hydrolase YqeK family.

It catalyses the reaction nicotinate beta-D-ribonucleotide + ATP + H(+) = deamido-NAD(+) + diphosphate. The enzyme catalyses P(1),P(4)-bis(5'-adenosyl) tetraphosphate + H2O = 2 ADP + 2 H(+). It participates in cofactor biosynthesis; NAD(+) biosynthesis; deamido-NAD(+) from nicotinate D-ribonucleotide: step 1/1. Catalyzes the reversible adenylation of nicotinate mononucleotide (NaMN) to nicotinic acid adenine dinucleotide (NaAD). Functionally, hydrolyzes diadenosine 5',5'''-P1,P4-tetraphosphate (Ap4A) to yield ADP. In Mycoplasma genitalium (strain ATCC 33530 / DSM 19775 / NCTC 10195 / G37) (Mycoplasmoides genitalium), this protein is Probable nicotinate-nucleotide adenylyltransferase/Ap4A hydrolase.